We begin with the raw amino-acid sequence, 445 residues long: Glutamyl-tRNA reductase (445 aa).

Residues 49–52 (TCNR), serine 109, 114–116 (ETQ), and glutamine 120 each bind substrate. Cysteine 50 serves as the catalytic Nucleophile. NADP(+) is bound at residue 189-194 (GAGEMS).

Belongs to the glutamyl-tRNA reductase family. As to quaternary structure, homodimer.

The catalysed reaction is (S)-4-amino-5-oxopentanoate + tRNA(Glu) + NADP(+) = L-glutamyl-tRNA(Glu) + NADPH + H(+). It participates in porphyrin-containing compound metabolism; protoporphyrin-IX biosynthesis; 5-aminolevulinate from L-glutamyl-tRNA(Glu): step 1/2. Its function is as follows. Catalyzes the NADPH-dependent reduction of glutamyl-tRNA(Glu) to glutamate 1-semialdehyde (GSA). In Staphylococcus carnosus (strain TM300), this protein is Glutamyl-tRNA reductase.